The primary structure comprises 607 residues: Chaperone protein HtpG (607 aa).

Residues 1 to 323 (MKKEEKIFKA…CDSLSLNISR (323 aa)) are a; substrate-binding. The b stretch occupies residues 324–534 (EILQQNAELQ…KGGLSLEMEK (211 aa)). Positions 535–607 (TLSEMTNNND…FIKNLNSLIK (73 aa)) are c.

This sequence belongs to the heat shock protein 90 family. In terms of assembly, homodimer.

It is found in the cytoplasm. Its function is as follows. Molecular chaperone. Has ATPase activity. The chain is Chaperone protein HtpG from Fusobacterium nucleatum subsp. nucleatum (strain ATCC 25586 / DSM 15643 / BCRC 10681 / CIP 101130 / JCM 8532 / KCTC 2640 / LMG 13131 / VPI 4355).